The following is a 123-amino-acid chain: UPF0102 protein mma_0204 (123 aa).

This sequence belongs to the UPF0102 family.

In Janthinobacterium sp. (strain Marseille) (Minibacterium massiliensis), this protein is UPF0102 protein mma_0204.